The sequence spans 863 residues: DNA-directed RNA polymerase subunit beta' (863 aa).

The disordered stretch occupies residues 1–83 (MSGEVAQDQP…SKKKETKASQ (83 aa)). Over residues 23-36 (EIVNSAITVQSSAK) the composition is skewed to polar residues. Zn(2+) contacts are provided by C159, C161, C180, and C183. 3 residues coordinate Mg(2+): D621, D623, and D625.

The protein belongs to the RNA polymerase beta' chain family. RpoC1 subfamily. As to quaternary structure, in plastids the minimal PEP RNA polymerase catalytic core is composed of four subunits: alpha, beta, beta', and beta''. When a (nuclear-encoded) sigma factor is associated with the core the holoenzyme is formed, which can initiate transcription. It depends on Mg(2+) as a cofactor. The cofactor is Zn(2+).

The protein localises to the plastid. It localises to the chloroplast. It catalyses the reaction RNA(n) + a ribonucleoside 5'-triphosphate = RNA(n+1) + diphosphate. Its function is as follows. DNA-dependent RNA polymerase catalyzes the transcription of DNA into RNA using the four ribonucleoside triphosphates as substrates. The sequence is that of DNA-directed RNA polymerase subunit beta' from Nephroselmis olivacea (Green alga).